The chain runs to 460 residues: MSEEEGRERAVTVEGDAESMNDGRALVQPPARSGDVITPTRAVLTLSKSMFNAGCFSLPYAWKLGGLWVSFVMSFVIAGLNWYGNHILVRASQHLAKKSDRSALDYGHFAKKVCDYSDIRFLRNNSKAVMYFVNVTILFYQLGMCSVAILFISDNLVNLVGDHLGGTRHQQMILMATVSLFFILLTNMFTEMRIVSFFALVSSVFFVIGAAVIMQYTVQQPNQWDKLPAATNFTGTITMIGMSMYAFEGQTMILPIENKLDNPAAFLAPFGVLSTTMIICTAFMTALGFFGYTGFGDSIAPTITTNVPKEGLYSTVNVFLMLQSLLGNSIAMYVVYDMFFNGFRRKFGARFPNVPKWLSDKGFRVFWVLVTYLMAVLIPKLEIMIPLVGVTSGALCALIFPPFFEMITFWTDWKGLLTYRQRMTKIFINLVVMAIGVFAIIAGVYTNIHAIIQSFSQPDP.

A run of 10 helical transmembrane segments spans residues 64-84, 132-152, 172-192, 194-214, 236-256, 270-290, 316-336, 362-382, 383-403, and 426-446; these read LGGL…NWYG, FVNV…ILFI, MILM…FTEM, IVSF…AVIM, TITM…ILPI, FGVL…LGFF, VNVF…YVVY, GFRV…PKLE, IMIP…FPPF, and IFIN…GVYT.

This sequence belongs to the amino acid/polyamine transporter 2 family. Expressed in the head, tail, body and ventral nerve cord neurons, muscles of the vulva, and intestine.

Its subcellular location is the membrane. It localises to the cytoplasmic granule. In terms of biological role, plays a role in the accumulation of vital dyes and endogenous fluorescent compounds in lysosome related organelles. Has an effect on lysosome related organelle (LRO) function, in a pathway with serotonin. This is Probable amino acid transporter skat-1 from Caenorhabditis elegans.